The sequence spans 161 residues: Suppressor of kinetochore protein 1 (161 aa).

The segment at Val-102–Arg-161 is interaction with the F-box domain of F-box proteins.

This sequence belongs to the SKP1 family. In terms of assembly, essential component of the E3 ubiquitin ligase Skp1-Cullin-1-F-box (SCF) complex. Interacts with cul1, fbh1, mcs2, pip1, pof1, pof2, pof3, pof4, pof5, pof6, pof7, pof8, pof9, pof10, pof11, pof12, pof13, pof14, pop1, pop2 and tfb3. Forms a complex with pof6 and sip1. Component of the RAVE complex composed of rav1, rav2 and skp1.

It is found in the cytoplasm. It localises to the nucleus. Required for cig2 degradation in the G2 and M phases of the cell cycle. Together with pof6, essential for septum processing and cell separation. Involved in mitotic progression, essential for the execution of anaphase B; required for coordinated structural alterations of mitotic spindles and segregation of nuclear membrane structures at anaphase. Involved in the DNA damage checkpoint pathway and maintenance of genome integrity. Component of the RAVE complex which is required for stable assembly of the vacuolar ATPase complex V-ATPase. This chain is Suppressor of kinetochore protein 1, found in Schizosaccharomyces pombe (strain 972 / ATCC 24843) (Fission yeast).